The chain runs to 223 residues: Cytochrome c biogenesis ATP-binding export protein CcmA (223 aa).

Residues 20 to 222 (LAAHALTYSR…PTRLLHLKKA (203 aa)) enclose the ABC transporter domain. 52–59 (GPNGIGKT) is a binding site for ATP.

Belongs to the ABC transporter superfamily. CcmA exporter (TC 3.A.1.107) family. The complex is composed of two ATP-binding proteins (CcmA) and two transmembrane proteins (CcmB).

It is found in the cell inner membrane. The enzyme catalyses heme b(in) + ATP + H2O = heme b(out) + ADP + phosphate + H(+). Its function is as follows. Part of the ABC transporter complex CcmAB involved in the biogenesis of c-type cytochromes; once thought to export heme, this seems not to be the case, but its exact role is uncertain. Responsible for energy coupling to the transport system. This chain is Cytochrome c biogenesis ATP-binding export protein CcmA, found in Xylella fastidiosa (strain 9a5c).